The primary structure comprises 246 residues: NAD(P)H-quinone oxidoreductase subunit K, organellar chromatophore (246 aa).

4 residues coordinate [4Fe-4S] cluster: C58, C59, C123, and C154.

Belongs to the complex I 20 kDa subunit family. In terms of assembly, NDH-1 is composed of 14 different subunits. Subunits nuoB, C, D, E, F, and G constitute the peripheral sector of the complex. The cofactor is [4Fe-4S] cluster.

The protein resides in the plastid. Its subcellular location is the organellar chromatophore thylakoid membrane. It carries out the reaction a quinone + NADH + H(+) = a quinol + NAD(+). Its function is as follows. NDH-1 shuttles electrons from NADH, via FMN and iron-sulfur (Fe-S) centers, to quinones in the respiratory chain. Couples the redox reaction to proton translocation (for every two electrons transferred, four hydrogen ions are translocated across the cytoplasmic membrane), and thus conserves the redox energy in a proton gradient. This Paulinella chromatophora protein is NAD(P)H-quinone oxidoreductase subunit K, organellar chromatophore.